A 494-amino-acid polypeptide reads, in one-letter code: Argininosuccinate lyase (494 aa).

This sequence belongs to the lyase 1 family. Argininosuccinate lyase subfamily.

Its subcellular location is the cytoplasm. The catalysed reaction is 2-(N(omega)-L-arginino)succinate = fumarate + L-arginine. The protein operates within amino-acid biosynthesis; L-arginine biosynthesis; L-arginine from L-ornithine and carbamoyl phosphate: step 3/3. This Methanosphaerula palustris (strain ATCC BAA-1556 / DSM 19958 / E1-9c) protein is Argininosuccinate lyase.